The chain runs to 284 residues: Phosphate import ATP-binding protein PstB 2 (284 aa).

Positions 1-22 are enriched in polar residues; sequence MTLLSTLRGISSPARQQPGTQS. Residues 1–29 form a disordered region; that stretch reads MTLLSTLRGISSPARQQPGTQSESRRGGD. The ABC transporter domain occupies 36–278; that stretch reads LAVAGVSHGF…PDDARARKFI (243 aa). 68 to 75 contacts ATP; that stretch reads GPSGTGKT.

This sequence belongs to the ABC transporter superfamily. Phosphate importer (TC 3.A.1.7) family. The complex is composed of two ATP-binding proteins (PstB), two transmembrane proteins (PstC and PstA) and a solute-binding protein (PstS).

The protein localises to the cell membrane. It catalyses the reaction phosphate(out) + ATP + H2O = ADP + 2 phosphate(in) + H(+). Its function is as follows. Part of the ABC transporter complex PstSACB involved in phosphate import. Responsible for energy coupling to the transport system. The protein is Phosphate import ATP-binding protein PstB 2 of Natronomonas pharaonis (strain ATCC 35678 / DSM 2160 / CIP 103997 / JCM 8858 / NBRC 14720 / NCIMB 2260 / Gabara) (Halobacterium pharaonis).